Here is a 574-residue protein sequence, read N- to C-terminus: Proline--tRNA ligase (574 aa).

This sequence belongs to the class-II aminoacyl-tRNA synthetase family. ProS type 1 subfamily. In terms of assembly, homodimer.

The protein resides in the cytoplasm. It carries out the reaction tRNA(Pro) + L-proline + ATP = L-prolyl-tRNA(Pro) + AMP + diphosphate. Catalyzes the attachment of proline to tRNA(Pro) in a two-step reaction: proline is first activated by ATP to form Pro-AMP and then transferred to the acceptor end of tRNA(Pro). As ProRS can inadvertently accommodate and process non-cognate amino acids such as alanine and cysteine, to avoid such errors it has two additional distinct editing activities against alanine. One activity is designated as 'pretransfer' editing and involves the tRNA(Pro)-independent hydrolysis of activated Ala-AMP. The other activity is designated 'posttransfer' editing and involves deacylation of mischarged Ala-tRNA(Pro). The misacylated Cys-tRNA(Pro) is not edited by ProRS. The protein is Proline--tRNA ligase of Marinomonas sp. (strain MWYL1).